A 287-amino-acid polypeptide reads, in one-letter code: ATP synthase gamma chain (287 aa).

It belongs to the ATPase gamma chain family. As to quaternary structure, F-type ATPases have 2 components, CF(1) - the catalytic core - and CF(0) - the membrane proton channel. CF(1) has five subunits: alpha(3), beta(3), gamma(1), delta(1), epsilon(1). CF(0) has three main subunits: a, b and c.

The protein localises to the cell inner membrane. Its function is as follows. Produces ATP from ADP in the presence of a proton gradient across the membrane. The gamma chain is believed to be important in regulating ATPase activity and the flow of protons through the CF(0) complex. This chain is ATP synthase gamma chain, found in Azotobacter vinelandii (strain DJ / ATCC BAA-1303).